A 719-amino-acid chain; its full sequence is 1,4-alpha-glucan branching enzyme GlgB (719 aa).

D400 acts as the Nucleophile in catalysis. Residue E453 is the Proton donor of the active site.

It belongs to the glycosyl hydrolase 13 family. GlgB subfamily. As to quaternary structure, monomer.

It catalyses the reaction Transfers a segment of a (1-&gt;4)-alpha-D-glucan chain to a primary hydroxy group in a similar glucan chain.. Its pathway is glycan biosynthesis; glycogen biosynthesis. Its function is as follows. Catalyzes the formation of the alpha-1,6-glucosidic linkages in glycogen by scission of a 1,4-alpha-linked oligosaccharide from growing alpha-1,4-glucan chains and the subsequent attachment of the oligosaccharide to the alpha-1,6 position. The sequence is that of 1,4-alpha-glucan branching enzyme GlgB from Chlamydia caviae (strain ATCC VR-813 / DSM 19441 / 03DC25 / GPIC) (Chlamydophila caviae).